The primary structure comprises 47 residues: Capistruin (47 aa).

Positions 1–28 (MVRLLAKLLRSTIHGSNGVSLDAVSSTH) are excised as a propeptide. Positions 29 to 37 (GTPGFQTPD) form a cross-link, isoaspartyl glycine isopeptide (Gly-Asp).

It is assumed that the two processing enzymes CapB/CapC convert the precursor protein CapA into the mature lasso peptide capistruin. CapB is assumed to cleave the precursor protein CapA and to set an N-terminal Gly free, whose a-NH2 group acts as the nucleophile in the subsequent cyclization reaction. CapC is most likely involved in the side-chain carboxyl group activation of aspartic acid at position 9 generating the electrophile for the condensation reaction. CapD may export capistruin outside of the producing cells.

The protein localises to the secreted. Functionally, peptide antibiotic that functions through inhibition of the bacterial DNA-dependent RNA polymerase (RNAP). Inhibits transcription by binding in RNAP secondary channel, where it sterically blocks the folding of the trigger loop, which is essential for efficient catalysis. In contrast to MccJ25, does not restrict access of nucleotide substrates to the catalytic center and shows a non-competitive mode of inhibition. Shows activity against closely related Gram-negative Burkholderia and Pseudomonas strains. Is not active against Gram-positive bacteria. This chain is Capistruin, found in Burkholderia thailandensis (strain ATCC 700388 / DSM 13276 / CCUG 48851 / CIP 106301 / E264).